Consider the following 650-residue polypeptide: Acetyl-coenzyme A synthetase (650 aa).

CoA-binding positions include Arg-191–Arg-194, Thr-311, and Asn-335. Residues Gly-387–Pro-389, Asp-411–Thr-416, Asp-500, and Arg-515 each bind ATP. Ser-523 is a binding site for CoA. Residue Arg-526 participates in ATP binding. 3 residues coordinate Mg(2+): Val-537, His-539, and Val-542. CoA is bound at residue Arg-584. Lys-609 bears the N6-acetyllysine mark.

The protein belongs to the ATP-dependent AMP-binding enzyme family. The cofactor is Mg(2+). In terms of processing, acetylated. Deacetylation by the SIR2-homolog deacetylase activates the enzyme.

It catalyses the reaction acetate + ATP + CoA = acetyl-CoA + AMP + diphosphate. Its function is as follows. Catalyzes the conversion of acetate into acetyl-CoA (AcCoA), an essential intermediate at the junction of anabolic and catabolic pathways. AcsA undergoes a two-step reaction. In the first half reaction, AcsA combines acetate with ATP to form acetyl-adenylate (AcAMP) intermediate. In the second half reaction, it can then transfer the acetyl group from AcAMP to the sulfhydryl group of CoA, forming the product AcCoA. This chain is Acetyl-coenzyme A synthetase, found in Shewanella sp. (strain W3-18-1).